The sequence spans 174 residues: Protein GrpE (174 aa).

The tract at residues M1–A35 is disordered. Residues E9–T25 show a composition bias toward acidic residues. Positions T26–A35 are enriched in basic and acidic residues.

It belongs to the GrpE family. In terms of assembly, homodimer.

It localises to the cytoplasm. Participates actively in the response to hyperosmotic and heat shock by preventing the aggregation of stress-denatured proteins, in association with DnaK and GrpE. It is the nucleotide exchange factor for DnaK and may function as a thermosensor. Unfolded proteins bind initially to DnaJ; upon interaction with the DnaJ-bound protein, DnaK hydrolyzes its bound ATP, resulting in the formation of a stable complex. GrpE releases ADP from DnaK; ATP binding to DnaK triggers the release of the substrate protein, thus completing the reaction cycle. Several rounds of ATP-dependent interactions between DnaJ, DnaK and GrpE are required for fully efficient folding. In Streptococcus pneumoniae (strain ATCC BAA-255 / R6), this protein is Protein GrpE.